Reading from the N-terminus, the 310-residue chain is tRNA pseudouridine synthase B (310 aa).

Catalysis depends on D49, which acts as the Nucleophile.

It belongs to the pseudouridine synthase TruB family. Type 1 subfamily.

It carries out the reaction uridine(55) in tRNA = pseudouridine(55) in tRNA. In terms of biological role, responsible for synthesis of pseudouridine from uracil-55 in the psi GC loop of transfer RNAs. This Rhizobium etli (strain ATCC 51251 / DSM 11541 / JCM 21823 / NBRC 15573 / CFN 42) protein is tRNA pseudouridine synthase B.